The following is a 332-amino-acid chain: Biotin synthase (332 aa).

In terms of domain architecture, Radical SAM core spans 53–282; it reads HFGKKVKLNM…TKEIRISGGR (230 aa). Residues Cys-71, Cys-75, and Cys-78 each contribute to the [4Fe-4S] cluster site. Residues Cys-115, Cys-147, Cys-207, and Arg-277 each coordinate [2Fe-2S] cluster.

It belongs to the radical SAM superfamily. Biotin synthase family. Homodimer. [4Fe-4S] cluster is required as a cofactor. The cofactor is [2Fe-2S] cluster.

The enzyme catalyses (4R,5S)-dethiobiotin + (sulfur carrier)-SH + 2 reduced [2Fe-2S]-[ferredoxin] + 2 S-adenosyl-L-methionine = (sulfur carrier)-H + biotin + 2 5'-deoxyadenosine + 2 L-methionine + 2 oxidized [2Fe-2S]-[ferredoxin]. It functions in the pathway cofactor biosynthesis; biotin biosynthesis; biotin from 7,8-diaminononanoate: step 2/2. In terms of biological role, catalyzes the conversion of dethiobiotin (DTB) to biotin by the insertion of a sulfur atom into dethiobiotin via a radical-based mechanism. This Bacillus mycoides (strain KBAB4) (Bacillus weihenstephanensis) protein is Biotin synthase.